The chain runs to 423 residues: RNA polymerase sigma factor SigA (423 aa).

The interval 1–76 (MKKSKRKNAQ…EEDLPIPKIS (76 aa)) is disordered. Residues 21 to 70 (VQEEAEELPEFPEGEPDPDLEDPDLALEDDLLDLPEEGEGLDLEEEEEDL) show a composition bias toward acidic residues. The tract at residues 78-113 (SDPVRQYLHEIGQVPLLTLEEEVELARKVEEGMEAI) is sigma-70 factor domain-1. The interval 187–257 (LIEANLRLVV…NRAIADQART (71 aa)) is sigma-70 factor domain-2. The short motif at 211–214 (DLIQ) is the Interaction with polymerase core subunit RpoC element. Residues 266 to 344 (ETINKLSRTA…DEHLPSPVDA (79 aa)) form a sigma-70 factor domain-3 region. Positions 357–409 (ALSKLSEREAMVLKLRKGLIDGREHTLEEVGAFFGVTRERIRQIENKALRKLK) are sigma-70 factor domain-4. A DNA-binding region (H-T-H motif) is located at residues 383 to 402 (LEEVGAFFGVTRERIRQIEN).

The protein belongs to the sigma-70 factor family. RpoD/SigA subfamily. Interacts transiently with the RNA polymerase catalytic core formed by RpoA, RpoB, RpoC and RpoZ (2 alpha, 1 beta, 1 beta' and 1 omega subunit) to form the RNA polymerase holoenzyme that can initiate transcription.

Its subcellular location is the cytoplasm. Functionally, sigma factors are initiation factors that promote the attachment of RNA polymerase to specific initiation sites and are then released. This sigma factor is the primary sigma factor during exponential growth. The chain is RNA polymerase sigma factor SigA from Thermus thermophilus (strain ATCC BAA-163 / DSM 7039 / HB27).